A 344-amino-acid chain; its full sequence is Methionine synthase (344 aa).

The Zn(2+) site is built by His-211, Cys-213, Glu-236, and Cys-315.

This sequence belongs to the archaeal MetE family. Requires Zn(2+) as cofactor.

It functions in the pathway amino-acid biosynthesis; L-methionine biosynthesis via de novo pathway. Functionally, catalyzes the transfer of a methyl group to L-homocysteine resulting in methionine formation. The physiological methyl donor is unknown. The sequence is that of Methionine synthase from Thermoplasma volcanium (strain ATCC 51530 / DSM 4299 / JCM 9571 / NBRC 15438 / GSS1).